Here is a 213-residue protein sequence, read N- to C-terminus: Holliday junction resolvase RecU (213 aa).

4 residues coordinate Mg(2+): Thr98, Asp100, Glu113, and Gln132.

It belongs to the RecU family. Requires Mg(2+) as cofactor.

Its subcellular location is the cytoplasm. The catalysed reaction is Endonucleolytic cleavage at a junction such as a reciprocal single-stranded crossover between two homologous DNA duplexes (Holliday junction).. Endonuclease that resolves Holliday junction intermediates in genetic recombination. Cleaves mobile four-strand junctions by introducing symmetrical nicks in paired strands. Promotes annealing of linear ssDNA with homologous dsDNA. Required for DNA repair, homologous recombination and chromosome segregation. The protein is Holliday junction resolvase RecU of Ligilactobacillus salivarius (strain UCC118) (Lactobacillus salivarius).